A 127-amino-acid chain; its full sequence is Major sperm protein 38 (127 aa).

Ala-2 carries the post-translational modification N-acetylalanine. The 118-residue stretch at 9-126 (DIQTQPGTKI…RRKNLPIEYN (118 aa)) folds into the MSP domain.

As to expression, sperm.

It is found in the cell projection. Its subcellular location is the pseudopodium. The protein resides in the cytoplasm. The protein localises to the cytoskeleton. Functionally, central component in molecular interactions underlying sperm crawling. Forms an extensive filament system that extends from sperm villipoda, along the leading edge of the pseudopod. This Caenorhabditis elegans protein is Major sperm protein 38 (msp-38).